Reading from the N-terminus, the 567-residue chain is MFPGLAAAAAAHRCSWAALCRLGGGRAATRGRSQGWKNVMTFESFTYVVPDIHPHLSIINQVKLYSTNVQKGGQGSQTPKADKVPSLTQTVENIGAELKAPLKQDPLQVRVKAVLKKRDYGSKYTKNNFITGVRAINEFCLKSSDLEQLRKIRRRSPHDDTESFTVFLRSDVEAKALEVWGSLEALAREKKLRKEAEIEYRERLFRNQRILREYGDFLGNTKPRSRAVSVFLKGPGKVVMVAICINGLNCFFKFLAWIYTGSASMFSEAIHSLSDTCNQGLLALGISKSVQTPDPSHPYGFSNMRYISSLISGVGIFMMGAGLSWYHGIMGLLHPQPMESLLWAYCILAGSLVSEGATLLVAINELRRSAQAKGTTFYKYVMESRDPSTNVILLEDTAAVLGVIIAATCMGLTSITGNPLYDSLGSLGVGTLLGVVSAFLIYTNTEALLGRSIQPEQVQRLTELLESDPSVRAIHDVKATDLGLGKVRFKAEVDFDGRVVTRSYLEKQDFDQMMQEIQEVKTPEQLEAFMLKHGENIIDTLGAEVDRLEKELKKRNPEVRHVDLEIL.

5 helical membrane passes run 238–258, 313–333, 341–361, 391–411, and 423–443; these read VVMVAICINGLNCFFKFLAWI, GVGIFMMGAGLSWYHGIMGLL, LLWAYCILAGSLVSEGATLLV, VILLEDTAAVLGVIIAATCMG, and SLGSLGVGTLLGVVSAFLIYT. The LXXLL motif signature appears at 461–465; it reads LTELL.

This sequence belongs to the cation diffusion facilitator (CDF) transporter (TC 2.A.4) family. SLC30A subfamily. As to quaternary structure, interacts with GRIP1, ESR1, AR and CTNNB1.

It is found in the mitochondrion membrane. The protein localises to the nucleus. It localises to the endoplasmic reticulum. It catalyses the reaction Zn(2+)(in) + 2 H(+)(out) = Zn(2+)(out) + 2 H(+)(in). In terms of biological role, acts as a zinc transporter involved in intracellular zinc homeostasis. Functions as a secondary coactivator for nuclear receptors by cooperating with p160 coactivators subtypes. Plays a role in transcriptional activation of Wnt-responsive genes. Mitochondrial proton-coupled zinc ion antiporter mediating the export of zinc from the mitochondria and involved in zinc homeostasis, zinc mobilization as well as mitochondrial morphology and health. In nucleus, functions as a secondary coactivator for nuclear receptors by cooperating with p160 coactivators subtypes. Plays a role in transcriptional activation of Wnt-responsive genes. This chain is Proton-coupled zinc antiporter SLC30A9, mitochondrial (Slc30a9), found in Mus musculus (Mouse).